Consider the following 122-residue polypeptide: Large ribosomal subunit protein uL14 (122 aa).

This sequence belongs to the universal ribosomal protein uL14 family. As to quaternary structure, part of the 50S ribosomal subunit. Forms a cluster with proteins L3 and L19. In the 70S ribosome, L14 and L19 interact and together make contacts with the 16S rRNA in bridges B5 and B8.

Functionally, binds to 23S rRNA. Forms part of two intersubunit bridges in the 70S ribosome. The polypeptide is Large ribosomal subunit protein uL14 (Lactobacillus gasseri (strain ATCC 33323 / DSM 20243 / BCRC 14619 / CIP 102991 / JCM 1131 / KCTC 3163 / NCIMB 11718 / NCTC 13722 / AM63)).